A 427-amino-acid polypeptide reads, in one-letter code: Septin-6 (427 aa).

At Ala-2 the chain carries N-acetylalanine. Residue Ser-27 is modified to Phosphoserine. In terms of domain architecture, Septin-type G spans 39 to 305 (QGFCFNILCV…ELYRRCKLEE (267 aa)). The G1 motif stretch occupies residues 49–56 (GETGLGKS). GTP is bound by residues 49-56 (GETGLGKS), Gly-104, 185-193 (KSDAISKSE), Gly-239, and Arg-254. Positions 101 to 104 (STVG) are G3 motif. A G4 motif region spans residues 184–187 (AKSD). The stretch at 321–416 (QETYEAKRNE…QSQGSQAGGS (96 aa)) forms a coiled coil. Lys-367 is subject to N6-acetyllysine. Residues 405–427 (LLQSQGSQAGGSQTLKRDKEKKN) form a disordered region. Residues 407 to 417 (QSQGSQAGGSQ) show a composition bias toward low complexity. Ser-416 is modified (phosphoserine). Thr-418 is subject to Phosphothreonine.

It belongs to the TRAFAC class TrmE-Era-EngA-EngB-Septin-like GTPase superfamily. Septin GTPase family. As to quaternary structure, septins polymerize into heterooligomeric protein complexes that form filaments, and associate with cellular membranes, actin filaments and microtubules. GTPase activity is required for filament formation. Filaments are assembled from asymmetrical heterotrimers, composed of SEPTIN2, SEPTIN6 and SEPTIN7 that associate head-to-head to form a hexameric unit. Within the trimer, directly interacts with SEPTIN2 and SEPTIN7. Also interacts with SEPTIN9 and SEPTIN12. Interaction with SEPTIN12 alters filament structure. Component of a septin core octameric complex consisting of SEPTIN12, SEPTIN7, SEPTIN6 and SEPTIN2 or SEPTIN4 in the order 12-7-6-2-2-6-7-12 or 12-7-6-4-4-6-7-12 and located in the sperm annulus. Interacts with SOCS7. Interacts with HNRNPA1.

It is found in the cytoplasm. The protein localises to the cytoskeleton. Its subcellular location is the spindle. It localises to the chromosome. The protein resides in the centromere. It is found in the kinetochore. The protein localises to the cleavage furrow. Its subcellular location is the midbody. It localises to the cell projection. The protein resides in the cilium. It is found in the flagellum. Filament-forming cytoskeletal GTPase. Required for normal organization of the actin cytoskeleton. Involved in cytokinesis. Forms a filamentous structure with SEPTIN12, SEPTIN6, SEPTIN2 and probably SEPTIN4 at the sperm annulus which is required for the structural integrity and motility of the sperm tail during postmeiotic differentiation. This chain is Septin-6, found in Bos taurus (Bovine).